Here is a 174-residue protein sequence, read N- to C-terminus: Shikimate kinase 2 (174 aa).

Residue 12–17 (GAGKTT) coordinates ATP. Residues Thr-16 and Asp-32 each coordinate Mg(2+). Substrate is bound by residues Asp-34, Arg-58, and Gly-79. Residues 112-126 (AEDPEDAQRPSLTGK) form an LID domain region. ATP is bound at residue Arg-120. Arg-139 lines the substrate pocket. Residue Gln-155 participates in ATP binding.

This sequence belongs to the shikimate kinase family. AroL subfamily. Monomer. Requires Mg(2+) as cofactor.

The protein resides in the cytoplasm. The catalysed reaction is shikimate + ATP = 3-phosphoshikimate + ADP + H(+). It functions in the pathway metabolic intermediate biosynthesis; chorismate biosynthesis; chorismate from D-erythrose 4-phosphate and phosphoenolpyruvate: step 5/7. In terms of biological role, catalyzes the specific phosphorylation of the 3-hydroxyl group of shikimic acid using ATP as a cosubstrate. The protein is Shikimate kinase 2 of Yersinia enterocolitica serotype O:8 / biotype 1B (strain NCTC 13174 / 8081).